Consider the following 91-residue polypeptide: Small ribosomal subunit protein bS18 (91 aa).

The segment at 1–21 (MSDERAPQRSTGPRKKRPFQR) is disordered. A compositionally biased stretch (basic residues) spans 12-21 (GPRKKRPFQR).

The protein belongs to the bacterial ribosomal protein bS18 family. In terms of assembly, part of the 30S ribosomal subunit. Forms a tight heterodimer with protein bS6.

Binds as a heterodimer with protein bS6 to the central domain of the 16S rRNA, where it helps stabilize the platform of the 30S subunit. The chain is Small ribosomal subunit protein bS18 from Geotalea daltonii (strain DSM 22248 / JCM 15807 / FRC-32) (Geobacter daltonii).